Consider the following 68-residue polypeptide: Guanine nucleotide-binding protein G(I)/G(S)/G(O) subunit gamma-5 (68 aa).

Ser2 carries the post-translational modification N-acetylserine. Phosphoserine is present on Ser2. A Cysteine methyl ester modification is found at Cys65. Cys65 carries S-geranylgeranyl cysteine lipidation. A propeptide spans 66–68 (SFL) (removed in mature form).

This sequence belongs to the G protein gamma family. G proteins are composed of 3 units, alpha, beta and gamma. In terms of tissue distribution, expressed in a variety of tissues.

It is found in the cell membrane. Functionally, guanine nucleotide-binding proteins (G proteins) are involved as a modulator or transducer in various transmembrane signaling systems. The beta and gamma chains are required for the GTPase activity, for replacement of GDP by GTP, and for G protein-effector interaction. This is Guanine nucleotide-binding protein G(I)/G(S)/G(O) subunit gamma-5 (GNG5) from Bos taurus (Bovine).